The chain runs to 161 residues: 2-C-methyl-D-erythritol 2,4-cyclodiphosphate synthase (161 aa).

The a divalent metal cation site is built by aspartate 10 and histidine 12. Residues 10 to 12 and 36 to 37 each bind 4-CDP-2-C-methyl-D-erythritol 2-phosphate; these read DVH and HS. Histidine 44 contributes to the a divalent metal cation binding site. 4-CDP-2-C-methyl-D-erythritol 2-phosphate contacts are provided by residues 58-60, 63-67, and arginine 144; these read DIG and FSDTD.

It belongs to the IspF family. Homotrimer. Requires a divalent metal cation as cofactor.

The enzyme catalyses 4-CDP-2-C-methyl-D-erythritol 2-phosphate = 2-C-methyl-D-erythritol 2,4-cyclic diphosphate + CMP. Its pathway is isoprenoid biosynthesis; isopentenyl diphosphate biosynthesis via DXP pathway; isopentenyl diphosphate from 1-deoxy-D-xylulose 5-phosphate: step 4/6. In terms of biological role, involved in the biosynthesis of isopentenyl diphosphate (IPP) and dimethylallyl diphosphate (DMAPP), two major building blocks of isoprenoid compounds. Catalyzes the conversion of 4-diphosphocytidyl-2-C-methyl-D-erythritol 2-phosphate (CDP-ME2P) to 2-C-methyl-D-erythritol 2,4-cyclodiphosphate (ME-CPP) with a corresponding release of cytidine 5-monophosphate (CMP). This is 2-C-methyl-D-erythritol 2,4-cyclodiphosphate synthase from Burkholderia ambifaria (strain MC40-6).